The primary structure comprises 66 residues: Conotoxin Cal6.38 (66 aa).

Residues 1–22 (MKLTFVLIVAVLVLAVCNFTVA) form the signal peptide. 3 cysteine pairs are disulfide-bonded: C38–C55, C45–C59, and C54–C64.

The protein belongs to the conotoxin O1 superfamily. Expressed by the venom duct.

Its subcellular location is the secreted. In terms of biological role, probable neurotoxin. The protein is Conotoxin Cal6.38 of Californiconus californicus (California cone).